A 185-amino-acid chain; its full sequence is Ribosome-recycling factor (185 aa).

Belongs to the RRF family.

The protein resides in the cytoplasm. Its function is as follows. Responsible for the release of ribosomes from messenger RNA at the termination of protein biosynthesis. May increase the efficiency of translation by recycling ribosomes from one round of translation to another. This Pelobacter propionicus (strain DSM 2379 / NBRC 103807 / OttBd1) protein is Ribosome-recycling factor.